Consider the following 120-residue polypeptide: uncharacterized protein (120 aa).

The protein to M.tuberculosis Rv0026 and Rv0739.

This is an uncharacterized protein from Mycobacterium tuberculosis (strain CDC 1551 / Oshkosh).